Consider the following 121-residue polypeptide: Large ribosomal subunit protein bL20 (121 aa).

This sequence belongs to the bacterial ribosomal protein bL20 family.

Binds directly to 23S ribosomal RNA and is necessary for the in vitro assembly process of the 50S ribosomal subunit. It is not involved in the protein synthesizing functions of that subunit. The sequence is that of Large ribosomal subunit protein bL20 from Persephonella marina (strain DSM 14350 / EX-H1).